A 481-amino-acid chain; its full sequence is Dual specificity protein kinase CLK4 (481 aa).

Disordered stretches follow at residues 1–46 (MRHS…CKPH) and 102–143 (SKSS…EDDE). Residues 8–24 (HCPDWDSRESWGHESYR) show a composition bias toward basic and acidic residues. Composition is skewed to basic residues over residues 25–34 (GSHKRKRRSH) and 106–136 (VRSR…RKRS). Phosphoserine occurs at positions 136 and 138. Residues 159 to 475 (YEIVDTLGEG…LDEALQHPFF (317 aa)) form the Protein kinase domain. ATP is bound by residues 165–173 (LGEGAFGKV) and Lys-189. Residue Asp-286 is the Proton acceptor of the active site.

This sequence belongs to the protein kinase superfamily. CMGC Ser/Thr protein kinase family. Lammer subfamily. In terms of assembly, interacts with UBL5. Autophosphorylates on all three types of residues. As to expression, expressed in liver, kidney, heart, muscle, brain and endothelial cells.

The protein resides in the nucleus. The catalysed reaction is L-seryl-[protein] + ATP = O-phospho-L-seryl-[protein] + ADP + H(+). It carries out the reaction L-threonyl-[protein] + ATP = O-phospho-L-threonyl-[protein] + ADP + H(+). The enzyme catalyses L-tyrosyl-[protein] + ATP = O-phospho-L-tyrosyl-[protein] + ADP + H(+). Its activity is regulated as follows. TG003 inhibits its kinase activity and affects the regulation of alternative splicing mediated by phosphorylation of SR proteins. In terms of biological role, dual specificity kinase acting on both serine/threonine and tyrosine-containing substrates. Phosphorylates serine- and arginine-rich (SR) proteins of the spliceosomal complex and may be a constituent of a network of regulatory mechanisms that enable SR proteins to control RNA splicing. Phosphorylates SRSF1 and SRSF3. Required for the regulation of alternative splicing of MAPT/TAU. Regulates the alternative splicing of tissue factor (F3) pre-mRNA in endothelial cells. The sequence is that of Dual specificity protein kinase CLK4 (CLK4) from Homo sapiens (Human).